Reading from the N-terminus, the 279-residue chain is Cholesterol 25-hydroxylase-like protein 2 (279 aa).

N-linked (GlcNAc...) asparagine glycosylation is found at asparagine 6 and asparagine 13. 3 membrane-spanning segments follow: residues 36 to 56 (LFPV…YTVL), 86 to 106 (LALT…AQWL), and 120 to 140 (LTAF…QYYL). Positions 128–262 (VGCTVVFDFQ…FAHWDWLGGT (135 aa)) constitute a Fatty acid hydroxylase domain. Positions 141-145 (WHLLH) match the Histidine box-1 motif. A Histidine box-2 motif is present at residues 156–160 (HALHH). 2 membrane-spanning segments follow: residues 165 to 185 (TFSL…GFWT) and 189 to 209 (PLLL…NIWV). Residues 237–243 (RHDAHHQ) carry the Histidine box-3 motif.

Belongs to the sterol desaturase family. It depends on Fe cation as a cofactor.

It is found in the endoplasmic reticulum membrane. In terms of biological role, may catalyze the formation of 25-hydroxycholesterol from cholesterol. The sequence is that of Cholesterol 25-hydroxylase-like protein 2 from Danio rerio (Zebrafish).